Reading from the N-terminus, the 128-residue chain is Protein BEX1 (128 aa).

The disordered stretch occupies residues 1–55; sequence MESKDQGAKNLNMENDHQKKEEKEEKPQDTIKREPVVAPTFEAGKNCAPRGGRRR. Residues 14-35 are compositionally biased toward basic and acidic residues; sequence ENDHQKKEEKEEKPQDTIKREP. Ser105 is modified (phosphoserine; by PKB/AKT1). The tract at residues 107–128 is disordered; it reads SLRAVSTDPPHHDHHDEFCLMP. Basic and acidic residues predominate over residues 115-128; that stretch reads PPHHDHHDEFCLMP. Positions 117–121 are his cluster; it reads HHDHH. Cys125 contributes to the Zn(2+) binding site.

It belongs to the BEX family. As to quaternary structure, interacts with neurotrophin receptor p75NTR/NGFR. Interacts with OMP. In terms of processing, phosphorylated. Phosphorylation of Ser-105 protects it from the proteasome. Ubiquitinated. Degraded by the proteasome. Expressed in the central nervous system. Expressed in Schwann cells from newborn sciatic nerve.

Its subcellular location is the nucleus. It localises to the cytoplasm. Signaling adapter molecule involved in p75NTR/NGFR signaling. Plays a role in cell cycle progression and neuronal differentiation. Inhibits neuronal differentiation in response to nerve growth factor (NGF). May act as a link between the cell cycle and neurotrophic factor signaling, possibly by functioning as an upstream modulator of receptor signaling, coordinating biological responses to external signals with internal cellular states. In absence of reductive stress, acts as a pseudosubstrate for the CRL2(FEM1B) complex: associates with FEM1B via zinc, thereby preventing association between FEM1B and its substrates. The polypeptide is Protein BEX1 (Bex1) (Rattus norvegicus (Rat)).